A 132-amino-acid chain; its full sequence is MKTIHVSVVTPDGPVYEDDVEMVSVKAKSGELGILPGHIPLVAPLEISAARLKKGGKTQYIAVSGGFLEVRPDNVTILAQAAERAEDIDVLRAKARKSGRTPLQSQQDDIDFKRAELALKRAMNRLSVAEMK.

This sequence belongs to the ATPase epsilon chain family. In terms of assembly, F-type ATPases have 2 components, CF(1) - the catalytic core - and CF(0) - the membrane proton channel. CF(1) has five subunits: alpha(3), beta(3), gamma(1), delta(1), epsilon(1). CF(0) has three main subunits: a, b and c.

The protein resides in the cell membrane. In terms of biological role, produces ATP from ADP in the presence of a proton gradient across the membrane. The sequence is that of ATP synthase epsilon chain (atpC) from Bacillus sp. (strain PS3).